The following is a 406-amino-acid chain: Probable tRNA sulfurtransferase (406 aa).

In terms of domain architecture, THUMP spans Asp-60–Thr-166. ATP contacts are provided by residues Met-184–Met-185, His-209–Phe-210, Arg-266, Gly-288, and Gln-297.

This sequence belongs to the ThiI family.

It is found in the cytoplasm. It catalyses the reaction [ThiI sulfur-carrier protein]-S-sulfanyl-L-cysteine + a uridine in tRNA + 2 reduced [2Fe-2S]-[ferredoxin] + ATP + H(+) = [ThiI sulfur-carrier protein]-L-cysteine + a 4-thiouridine in tRNA + 2 oxidized [2Fe-2S]-[ferredoxin] + AMP + diphosphate. It carries out the reaction [ThiS sulfur-carrier protein]-C-terminal Gly-Gly-AMP + S-sulfanyl-L-cysteinyl-[cysteine desulfurase] + AH2 = [ThiS sulfur-carrier protein]-C-terminal-Gly-aminoethanethioate + L-cysteinyl-[cysteine desulfurase] + A + AMP + 2 H(+). Its pathway is cofactor biosynthesis; thiamine diphosphate biosynthesis. In terms of biological role, catalyzes the ATP-dependent transfer of a sulfur to tRNA to produce 4-thiouridine in position 8 of tRNAs, which functions as a near-UV photosensor. Also catalyzes the transfer of sulfur to the sulfur carrier protein ThiS, forming ThiS-thiocarboxylate. This is a step in the synthesis of thiazole, in the thiamine biosynthesis pathway. The sulfur is donated as persulfide by IscS. This is Probable tRNA sulfurtransferase from Limosilactobacillus reuteri subsp. reuteri (strain JCM 1112) (Lactobacillus reuteri).